The chain runs to 570 residues: Adenine deaminase (570 aa).

The protein belongs to the metallo-dependent hydrolases superfamily. Adenine deaminase family. Mn(2+) is required as a cofactor.

The catalysed reaction is adenine + H2O + H(+) = hypoxanthine + NH4(+). This Petrotoga mobilis (strain DSM 10674 / SJ95) protein is Adenine deaminase.